The chain runs to 122 residues: MSLTNEQIVDAIAEKSLMEVMELVKAIEDKFGVSAAAPVAAAAAAGPAAVVEEQTEFTVVLTNPGLNKVTAIKAVRGVTGLGLKEAKDLTEAGGILKEGVSKDEAEKIKKEMTEAGATVEVK.

The protein belongs to the bacterial ribosomal protein bL12 family. As to quaternary structure, homodimer. Part of the ribosomal stalk of the 50S ribosomal subunit. Forms a multimeric L10(L12)X complex, where L10 forms an elongated spine to which 2 to 4 L12 dimers bind in a sequential fashion. Binds GTP-bound translation factors.

Functionally, forms part of the ribosomal stalk which helps the ribosome interact with GTP-bound translation factors. Is thus essential for accurate translation. This Xanthomonas oryzae pv. oryzae (strain MAFF 311018) protein is Large ribosomal subunit protein bL12.